The primary structure comprises 331 residues: Phosphoenolpyruvate transferase (331 aa).

Asp63 contributes to the 7,8-didemethyl-8-hydroxy-5-deazariboflavin binding site.

It belongs to the CofD family. As to quaternary structure, homodimer. The cofactor is Mg(2+).

The enzyme catalyses enolpyruvoyl-2-diphospho-5'-guanosine + 7,8-didemethyl-8-hydroxy-5-deazariboflavin = dehydro coenzyme F420-0 + GMP + H(+). Its pathway is cofactor biosynthesis; coenzyme F420 biosynthesis. Its function is as follows. Catalyzes the transfer of the phosphoenolpyruvate moiety from enoylpyruvoyl-2-diphospho-5'-guanosine (EPPG) to 7,8-didemethyl-8-hydroxy-5-deazariboflavin (FO) with the formation of dehydro coenzyme F420-0 and GMP. This Mycobacterium sp. (strain JLS) protein is Phosphoenolpyruvate transferase.